A 380-amino-acid polypeptide reads, in one-letter code: Cytochrome b (380 aa).

4 helical membrane-spanning segments follow: residues phenylalanine 34–methionine 54, tryptophan 78–isoleucine 99, tryptophan 114–leucine 134, and phenylalanine 179–threonine 199. Heme b is bound by residues histidine 84 and histidine 98. Positions 183 and 197 each coordinate heme b. Position 202 (histidine 202) interacts with a ubiquinone. The next 4 membrane-spanning stretches (helical) occupy residues isoleucine 227–serine 247, leucine 289–histidine 309, leucine 321–serine 341, and phenylalanine 348–proline 368.

The protein belongs to the cytochrome b family. In terms of assembly, the cytochrome bc1 complex contains 11 subunits: 3 respiratory subunits (MT-CYB, CYC1 and UQCRFS1), 2 core proteins (UQCRC1 and UQCRC2) and 6 low-molecular weight proteins (UQCRH/QCR6, UQCRB/QCR7, UQCRQ/QCR8, UQCR10/QCR9, UQCR11/QCR10 and a cleavage product of UQCRFS1). This cytochrome bc1 complex then forms a dimer. Requires heme b as cofactor.

Its subcellular location is the mitochondrion inner membrane. Component of the ubiquinol-cytochrome c reductase complex (complex III or cytochrome b-c1 complex) that is part of the mitochondrial respiratory chain. The b-c1 complex mediates electron transfer from ubiquinol to cytochrome c. Contributes to the generation of a proton gradient across the mitochondrial membrane that is then used for ATP synthesis. This is Cytochrome b (MT-CYB) from Alectoris rufa (Red-legged partridge).